Consider the following 100-residue polypeptide: Replication restart protein PriB (100 aa).

The SSB domain maps to 1–99; sequence MGFNNLVSLA…LRIQNIQEYK (99 aa).

This sequence belongs to the PriB family. Homodimer. Interacts with PriA and DnaT. Component of the replication restart primosome. Primosome assembly occurs via a 'hand-off' mechanism. PriA binds to replication forks, subsequently PriB then DnaT bind; DnaT then displaces ssDNA to generate the helicase loading substrate.

Its function is as follows. Involved in the restart of stalled replication forks, which reloads the replicative helicase on sites other than the origin of replication; the PriA-PriB pathway is the major replication restart pathway. During primosome assembly it facilitates complex formation between PriA and DnaT on DNA; stabilizes PriA on DNA. Stimulates the DNA unwinding activity of PriA helicase. The protein is Replication restart protein PriB of Neisseria meningitidis serogroup B (strain ATCC BAA-335 / MC58).